The sequence spans 718 residues: Acetolactate synthase, mitochondrial (718 aa).

2 disordered regions span residues 1–50 (MLTR…APVY) and 72–101 (RKIQ…APQP). Over residues 32 to 45 (RYSNNIHTSSTQNA) the composition is skewed to polar residues. Residues 76–99 (SSASTAAASPAVRPQPAQHFQAAP) are compositionally biased toward low complexity. E173 lines the thiamine diphosphate pocket. R275 lines the FAD pocket. The tract at residues 296–327 (IPAKSAQPGHSPYLPSNPLNPSSQPSDPLPGD) is disordered. The segment covering 306-325 (SPYLPSNPLNPSSQPSDPLP) has biased composition (low complexity). FAD-binding positions include 397–418 (HGSA…LGVR) and 449–468 (EIQP…VLGD). The tract at residues 541–621 (QHQMWACQYY…VKVLLFNNEF (81 aa)) is thiamine pyrophosphate binding. Mg(2+) is bound by residues D592 and N619.

The protein belongs to the TPP enzyme family. It depends on Mg(2+) as a cofactor. Thiamine diphosphate is required as a cofactor.

The protein localises to the mitochondrion. The catalysed reaction is 2 pyruvate + H(+) = (2S)-2-acetolactate + CO2. Its pathway is amino-acid biosynthesis; L-isoleucine biosynthesis; L-isoleucine from 2-oxobutanoate: step 1/4. It functions in the pathway amino-acid biosynthesis; L-valine biosynthesis; L-valine from pyruvate: step 1/4. This Cryptococcus neoformans var. neoformans serotype D (strain JEC21 / ATCC MYA-565) (Filobasidiella neoformans) protein is Acetolactate synthase, mitochondrial (ILV2).